Reading from the N-terminus, the 616-residue chain is Protein phosphatase EYA4 (616 aa).

An N-acetylmethionine modification is found at methionine 1. 3 disordered regions span residues 1–66, 186–211, and 277–345; these read MEDT…VTTN, SQTQ…PGQT, and ADGT…DSDL. Glycyl lysine isopeptide (Lys-Gly) (interchain with G-Cter in SUMO2) cross-links involve residues lysine 14 and lysine 52. Low complexity predominate over residues 56-66; it reads SGLSSTSVTTN. Residues 277–311 are compositionally biased toward polar residues; it reads ADGTSSSTSTYQLQESLQGLTSQPGEFDTVQSPST. Phosphoserine is present on serine 338. Aspartate 352 functions as the Nucleophile in the catalytic mechanism. 3 residues coordinate Mg(2+): aspartate 352, aspartate 354, and aspartate 580. The active-site Proton donor is aspartate 354.

This sequence belongs to the HAD-like hydrolase superfamily. EYA family. In terms of assembly, interacts with SIX3; translocates EYA4 from the cytoplasm to the nucleus and promotes activation of their target genes. The cofactor is Mg(2+). In terms of tissue distribution, in the embryo, expressed mainly in the craniofacial mesenchyme, dermamyotome and limb.

The protein resides in the cytoplasm. It localises to the nucleus. It catalyses the reaction O-phospho-L-tyrosyl-[protein] + H2O = L-tyrosyl-[protein] + phosphate. Functionally, tyrosine phosphatase that specifically dephosphorylates 'Tyr-142' of histone H2AX (H2AXY142ph). 'Tyr-142' phosphorylation of histone H2AX plays a central role in DNA repair and acts as a mark that distinguishes between apoptotic and repair responses to genotoxic stress. Promotes efficient DNA repair by dephosphorylating H2AX, promoting the recruitment of DNA repair complexes containing MDC1. Its function as histone phosphatase probably explains its role in transcription regulation during organogenesis. May be involved in development of the eye. This Mus musculus (Mouse) protein is Protein phosphatase EYA4 (Eya4).